The primary structure comprises 130 residues: Small ribosomal subunit protein uS8 (130 aa).

It belongs to the universal ribosomal protein uS8 family. Part of the 30S ribosomal subunit. Contacts proteins S5 and S12.

Functionally, one of the primary rRNA binding proteins, it binds directly to 16S rRNA central domain where it helps coordinate assembly of the platform of the 30S subunit. The chain is Small ribosomal subunit protein uS8 from Aliivibrio fischeri (strain MJ11) (Vibrio fischeri).